A 54-amino-acid polypeptide reads, in one-letter code: Large ribosomal subunit protein bL33B (54 aa).

The protein belongs to the bacterial ribosomal protein bL33 family.

The polypeptide is Large ribosomal subunit protein bL33B (Myxococcus xanthus (strain DK1622)).